Here is a 354-residue protein sequence, read N- to C-terminus: Inositol-tetrakisphosphate 1-kinase 1 (354 aa).

The span at M1–E16 shows a compositional bias: basic and acidic residues. The tract at residues M1–L24 is disordered. 2 residues coordinate 1D-myo-inositol 1,3,4-trisphosphate: K53 and K95. ATP is bound by residues R130 and K180. The 208-residue stretch at L140–Y347 folds into the ATP-grasp domain. 1D-myo-inositol 1,3,4-trisphosphate is bound by residues H191 and K223. ATP is bound by residues Q212–K223 and S238. Residues D303, D318, and N320 each contribute to the Mg(2+) site. Residue N320 participates in 1D-myo-inositol 1,3,4-trisphosphate binding.

Belongs to the ITPK1 family. As to quaternary structure, monomer. Requires Mg(2+) as cofactor.

The catalysed reaction is 1D-myo-inositol 3,4,5,6-tetrakisphosphate + ATP = 1D-myo-inositol 1,3,4,5,6-pentakisphosphate + ADP + H(+). It carries out the reaction 1D-myo-inositol 1,3,4-trisphosphate + ATP = 1D-myo-inositol 1,3,4,5-tetrakisphosphate + ADP + H(+). It catalyses the reaction 1D-myo-inositol 1,3,4-trisphosphate + ATP = 1D-myo-inositol 1,3,4,6-tetrakisphosphate + ADP + H(+). Functionally, kinase that can phosphorylate various inositol polyphosphate such as Ins(3,4,5,6)P4 or Ins(1,3,4)P3 and participates in phytic acid biosynthesis in developing seeds. Phytic acid is the primary storage form of phosphorus in cereal grains and other plant seeds. The protein is Inositol-tetrakisphosphate 1-kinase 1 (ITPK1) of Oryza sativa subsp. indica (Rice).